The sequence spans 161 residues: Protein-export protein SecB (161 aa).

Belongs to the SecB family. Homotetramer, a dimer of dimers. One homotetramer interacts with 1 SecA dimer.

It is found in the cytoplasm. Functionally, one of the proteins required for the normal export of preproteins out of the cell cytoplasm. It is a molecular chaperone that binds to a subset of precursor proteins, maintaining them in a translocation-competent state. It also specifically binds to its receptor SecA. This Shewanella sp. (strain ANA-3) protein is Protein-export protein SecB.